Reading from the N-terminus, the 449-residue chain is MNPNQKIITIGSICMVIGIVSLMLQIGNIISIWVSHSIQTGNQHQAEPISNTNFLTEKAVASVTLAGNSSLCPISGWAVHSKDNSIRIGSKGDVFVIREPFISCSHLECRTFFLTQGALLNDKHSNGTVKDRSPHRTLMSCPVGEAPSPYNSRFESVAWSASACHDGTSWLTIGISGPDNGAVAVLKYNGIITDTIKSWRNNILRTQESECACVNGSCFTVMTDGPSNGQASYKIFKMEKGKVVKSVELDAPNYHYEECSCYPDAGEITCVCRDNWHGSNRPWVSFNQNLEYQIGYICSGVFGDNPRPNDGTGSCGPVSPNGAYGVKGFSFKYGNGVWIGRTKSTNSRSGFEMIWDPNGWTGTDSSFSVKQDIVAITDWSGYSGSFVQHPELTGLDCIRPCFWVELIRGRPKERTIWTSGSSISFCGVNSDTVGWSWPDGAELPFTIDK.

Residues 1–6 (MNPNQK) lie on the Intravirion side of the membrane. Residues 7-27 (IITIGSICMVIGIVSLMLQIG) form a helical membrane-spanning segment. Residues 11–33 (GSICMVIGIVSLMLQIGNIISIW) are involved in apical transport and lipid raft association. The Virion surface segment spans residues 28 to 449 (NIISIWVSHS…GAELPFTIDK (422 aa)). The hypervariable stalk region stretch occupies residues 36 to 70 (HSIQTGNQHQAEPISNTNFLTEKAVASVTLAGNSS). N-linked (GlcNAc...) asparagine; by host glycosylation occurs at Asn-68. The interval 71–449 (LCPISGWAVH…GAELPFTIDK (379 aa)) is head of neuraminidase. 8 disulfides stabilise this stretch: Cys-72–Cys-397, Cys-104–Cys-109, Cys-164–Cys-211, Cys-213–Cys-218, Cys-259–Cys-272, Cys-261–Cys-270, Cys-298–Cys-315, and Cys-401–Cys-426. Arg-98 serves as a coordination point for substrate. Asn-126 carries an N-linked (GlcNAc...) asparagine; by host glycan. Asp-131 acts as the Proton donor/acceptor in catalysis. Arg-132 provides a ligand contact to substrate. The N-linked (GlcNAc...) asparagine; by host glycan is linked to Asn-215. 257 to 258 (EE) lines the substrate pocket. Arg-273 is a substrate binding site. Ca(2+) contacts are provided by Asp-274, Gly-278, and Asp-304. A substrate-binding site is contributed by Arg-348. Residue Tyr-382 is the Nucleophile of the active site.

The protein belongs to the glycosyl hydrolase 34 family. As to quaternary structure, homotetramer. Ca(2+) is required as a cofactor. In terms of processing, N-glycosylated.

It localises to the virion membrane. Its subcellular location is the host apical cell membrane. It carries out the reaction Hydrolysis of alpha-(2-&gt;3)-, alpha-(2-&gt;6)-, alpha-(2-&gt;8)- glycosidic linkages of terminal sialic acid residues in oligosaccharides, glycoproteins, glycolipids, colominic acid and synthetic substrates.. With respect to regulation, inhibited by the neuraminidase inhibitors zanamivir (Relenza) and oseltamivir (Tamiflu). These drugs interfere with the release of progeny virus from infected cells and are effective against all influenza strains. Resistance to neuraminidase inhibitors is quite rare. Catalyzes the removal of terminal sialic acid residues from viral and cellular glycoconjugates. Cleaves off the terminal sialic acids on the glycosylated HA during virus budding to facilitate virus release. Additionally helps virus spread through the circulation by further removing sialic acids from the cell surface. These cleavages prevent self-aggregation and ensure the efficient spread of the progeny virus from cell to cell. Otherwise, infection would be limited to one round of replication. Described as a receptor-destroying enzyme because it cleaves a terminal sialic acid from the cellular receptors. May facilitate viral invasion of the upper airways by cleaving the sialic acid moieties on the mucin of the airway epithelial cells. Likely to plays a role in the budding process through its association with lipid rafts during intracellular transport. May additionally display a raft-association independent effect on budding. Plays a role in the determination of host range restriction on replication and virulence. Sialidase activity in late endosome/lysosome traffic seems to enhance virus replication. The protein is Neuraminidase of Aves (Cat).